A 1003-amino-acid polypeptide reads, in one-letter code: Phosphoenolpyruvate carboxylase (1003 aa).

The tract at residues 1–24 is disordered; sequence MIMTVSDPGGSSMSSSSAITPESE. Residues H190 and K646 contribute to the active site.

The protein belongs to the PEPCase type 1 family. Mg(2+) serves as cofactor.

The catalysed reaction is oxaloacetate + phosphate = phosphoenolpyruvate + hydrogencarbonate. Functionally, forms oxaloacetate, a four-carbon dicarboxylic acid source for the tricarboxylic acid cycle. In Synechococcus sp. (strain WH7803), this protein is Phosphoenolpyruvate carboxylase.